A 132-amino-acid polypeptide reads, in one-letter code: Small ribosomal subunit protein uS8 (132 aa).

The protein belongs to the universal ribosomal protein uS8 family. In terms of assembly, part of the 30S ribosomal subunit. Contacts proteins S5 and S12.

One of the primary rRNA binding proteins, it binds directly to 16S rRNA central domain where it helps coordinate assembly of the platform of the 30S subunit. The protein is Small ribosomal subunit protein uS8 of Streptococcus pyogenes serotype M49 (strain NZ131).